Consider the following 766-residue polypeptide: 5-methyltetrahydropteroyltriglutamate--homocysteine methyltransferase (766 aa).

5-methyltetrahydropteroyltri-L-glutamate-binding positions include 16–19 and lysine 119; that span reads RELK. L-homocysteine contacts are provided by residues 440–442 and glutamate 493; that span reads IGS. Residues 440–442 and glutamate 493 each bind L-methionine; that span reads IGS. Residues 524–525 and tryptophan 570 each bind 5-methyltetrahydropteroyltri-L-glutamate; that span reads RC. Aspartate 608 provides a ligand contact to L-homocysteine. Aspartate 608 serves as a coordination point for L-methionine. Glutamate 614 is a 5-methyltetrahydropteroyltri-L-glutamate binding site. Residues histidine 650, cysteine 652, and glutamate 674 each contribute to the Zn(2+) site. Residue histidine 703 is the Proton donor of the active site. Residue cysteine 735 participates in Zn(2+) binding.

Belongs to the vitamin-B12 independent methionine synthase family. Zn(2+) serves as cofactor.

The catalysed reaction is 5-methyltetrahydropteroyltri-L-glutamate + L-homocysteine = tetrahydropteroyltri-L-glutamate + L-methionine. It participates in amino-acid biosynthesis; L-methionine biosynthesis via de novo pathway; L-methionine from L-homocysteine (MetE route): step 1/1. Functionally, catalyzes the transfer of a methyl group from 5-methyltetrahydrofolate to homocysteine resulting in methionine formation. In Pseudomonas aeruginosa (strain UCBPP-PA14), this protein is 5-methyltetrahydropteroyltriglutamate--homocysteine methyltransferase.